The chain runs to 229 residues: Ferric nitrobindin-like protein (229 aa).

Residues 1–54 (MSENSTPNNPVVPGAGADGPSLSDSASISGSDAVNLAAEQSKSTAHRNIPGLGD) form a disordered region. Positions 18–33 (DGPSLSDSASISGSDA) are enriched in low complexity. The short motif at 82–88 (GVWRGEG) is the GXWXGXG element.

The protein belongs to the nitrobindin family.

The sequence is that of Ferric nitrobindin-like protein from Corynebacterium glutamicum (strain R).